The following is a 237-amino-acid chain: ATP synthase subunit a (237 aa).

The next 5 membrane-spanning stretches (helical) occupy residues 17 to 37 (LSDM…AVAA), 75 to 95 (FLTL…LGLP), 112 to 132 (DATV…YYGV), 179 to 201 (ILLG…GAAI), and 214 to 234 (GTIQ…HKVS).

Belongs to the ATPase A chain family. In terms of assembly, F-type ATPases have 2 components, CF(1) - the catalytic core - and CF(0) - the membrane proton channel. CF(1) has five subunits: alpha(3), beta(3), gamma(1), delta(1), epsilon(1). CF(0) has three main subunits: a(1), b(2) and c(9-12). The alpha and beta chains form an alternating ring which encloses part of the gamma chain. CF(1) is attached to CF(0) by a central stalk formed by the gamma and epsilon chains, while a peripheral stalk is formed by the delta and b chains.

Its subcellular location is the cell membrane. In terms of biological role, key component of the proton channel; it plays a direct role in the translocation of protons across the membrane. The sequence is that of ATP synthase subunit a from Geobacillus kaustophilus (strain HTA426).